The following is a 198-amino-acid chain: Ribonuclease HII (198 aa).

One can recognise an RNase H type-2 domain in the interval 10-198; it reads QLVAGVDEVG…PVKRALGLAS (189 aa). Aspartate 16, glutamate 17, and aspartate 108 together coordinate a divalent metal cation.

It belongs to the RNase HII family. It depends on Mn(2+) as a cofactor. Requires Mg(2+) as cofactor.

The protein resides in the cytoplasm. It carries out the reaction Endonucleolytic cleavage to 5'-phosphomonoester.. In terms of biological role, endonuclease that specifically degrades the RNA of RNA-DNA hybrids. The sequence is that of Ribonuclease HII from Shigella dysenteriae serotype 1 (strain Sd197).